A 202-amino-acid polypeptide reads, in one-letter code: Type II restriction enzyme MunI (202 aa).

In terms of assembly, homodimer.

It catalyses the reaction Endonucleolytic cleavage of DNA to give specific double-stranded fragments with terminal 5'-phosphates.. A P subtype restriction enzyme that recognizes the double-stranded sequence 5'-CAATTG-3' and cleaves after C-1. The sequence is that of Type II restriction enzyme MunI from Mycoplasma sp.